Here is a 473-residue protein sequence, read N- to C-terminus: H(+)/Cl(-) exchange transporter ClcA (473 aa).

Over 1 to 32 the chain is Cytoplasmic; it reads MKTDTSTFLAQQIVRLRRRDQIRRLMQRDKTP. The chain crosses the membrane as a helical span at residues 33–69; sequence LAILFMAAVVGTLTGLVGVAFEKAVSWVQNMRIGALV. Over 70 to 76 the chain is Periplasmic; sequence QVADHAF. Residues 77–100 traverse the membrane as a helical segment; that stretch reads LLWPLAFILSALLAMVGYFLVRKF. A Selectivity filter part_1 motif is present at residues 106-110; it reads GSGIP. Position 107 (Ser107) interacts with chloride. The helical intramembrane region spans 109-116; the sequence is IPEIEGAL. At 117-123 the chain is on the cytoplasmic side; that stretch reads EELRPVR. Helical transmembrane passes span 124–141 and 148–166; these read WWRV…TLGA and EGPT…LDVF. The Selectivity filter part_2 signature appears at 146 to 150; it reads GREGP. At 167-176 the chain is on the cytoplasmic side; that stretch reads RMRSAEARHT. The helical intramembrane region spans 177–189; that stretch reads LLATGAAAGLSAA. The note=Loop between two helices intramembrane region spans 190-192; it reads FNA. An intramembrane region (helical) is located at residues 193–201; sequence PLAGILFII. Over 202-214 the chain is Cytoplasmic; the sequence is EEMRPQFRYNLIS. A helical transmembrane segment spans residues 215 to 232; the sequence is IKAVFTGVIMSSIVFRIF. The Periplasmic portion of the chain corresponds to 233 to 252; sequence NGEAPIIEVGKLSDAPVNTL. The chain crosses the membrane as a helical span at residues 253-281; the sequence is WLYLILGIIFGCVGPVFNSLVLRTQDMFQ. The Cytoplasmic segment spans residues 282–287; sequence RFHGGE. The chain crosses the membrane as a helical span at residues 288–308; that stretch reads IKKWVLMGGAIGGLCGILGLI. Residues 309-329 lie on the Periplasmic side of the membrane; it reads EPAAAGGGFNLIPIAAAGNFS. The helical transmembrane segment at 330–349 threads the bilayer; that stretch reads VGLLLFIFITRVVTTLLCFS. Residues 350 to 354 are Cytoplasmic-facing; it reads SGAPG. A Selectivity filter part_3 motif is present at residues 355–359; sequence GIFAP. The chain crosses the membrane as a helical span at residues 355 to 378; that stretch reads GIFAPMLALGTLLGTAFGMAAAVL. The chloride site is built by Ile356 and Phe357. At 379–386 the chain is on the periplasmic side; it reads FPQYHLEA. The helical intramembrane region spans 387–401; it reads GTFAIAGMGALMAAS. Residues 402 to 404 constitute an intramembrane region (note=Loop between two helices); sequence VRA. The helical intramembrane region spans 405–416; sequence PLTGIVLVLEMT. The note=Loop between two helices intramembrane region spans 417–421; the sequence is DNYQL. A helical membrane pass occupies residues 422-438; that stretch reads ILPMIITCLGATLLAQF. The Cytoplasmic segment spans residues 439 to 473; sequence LGGKPLYSTILARTLAKQDAEQAEKNQNAPADENT. Position 445 (Tyr445) interacts with chloride.

Belongs to the chloride channel (TC 2.A.49) family. ClcA subfamily. In terms of assembly, homodimer.

It is found in the cell inner membrane. The catalysed reaction is 2 chloride(in) + H(+)(out) = 2 chloride(out) + H(+)(in). Proton-coupled chloride transporter. Functions as antiport system and exchanges two chloride ions for 1 proton. Probably acts as an electrical shunt for an outwardly-directed proton pump that is linked to amino acid decarboxylation, as part of the extreme acid resistance (XAR) response. In Salmonella typhimurium (strain LT2 / SGSC1412 / ATCC 700720), this protein is H(+)/Cl(-) exchange transporter ClcA (clcA).